Consider the following 341-residue polypeptide: Biotin synthase (341 aa).

Positions 56 to 285 constitute a Radical SAM core domain; it reads ADIQRAALLS…KARVRLSAGR (230 aa). The [4Fe-4S] cluster site is built by Cys-71, Cys-75, and Cys-78. Residues Cys-116, Cys-148, Cys-208, and Arg-280 each contribute to the [2Fe-2S] cluster site.

Belongs to the radical SAM superfamily. Biotin synthase family. Homodimer. [4Fe-4S] cluster serves as cofactor. [2Fe-2S] cluster is required as a cofactor.

The catalysed reaction is (4R,5S)-dethiobiotin + (sulfur carrier)-SH + 2 reduced [2Fe-2S]-[ferredoxin] + 2 S-adenosyl-L-methionine = (sulfur carrier)-H + biotin + 2 5'-deoxyadenosine + 2 L-methionine + 2 oxidized [2Fe-2S]-[ferredoxin]. Its pathway is cofactor biosynthesis; biotin biosynthesis; biotin from 7,8-diaminononanoate: step 2/2. Its function is as follows. Catalyzes the conversion of dethiobiotin (DTB) to biotin by the insertion of a sulfur atom into dethiobiotin via a radical-based mechanism. The protein is Biotin synthase of Methylorubrum populi (strain ATCC BAA-705 / NCIMB 13946 / BJ001) (Methylobacterium populi).